Consider the following 38-residue polypeptide: Large ribosomal subunit protein bL36 (38 aa).

This sequence belongs to the bacterial ribosomal protein bL36 family.

The chain is Large ribosomal subunit protein bL36 from Enterococcus faecalis (strain ATCC 700802 / V583).